The following is a 147-amino-acid chain: MSRLDVTEKIITAKVMKGLKWADVAAKLNLSKEWVTAACLGQMTLNAEQAKIIAEIFDLSDEDQKWLMVTPCKGSLPTAVPTDPLIYRFYEMINVYGTTIKQLIHEEFGDGIMSAIDFKMDLQRVADPMGDRVNIVLNGKFLPYKQF.

Catalysis depends on residues arginine 88, glutamate 91, and serine 114.

It belongs to the cyanase family.

It catalyses the reaction cyanate + hydrogencarbonate + 3 H(+) = NH4(+) + 2 CO2. Catalyzes the reaction of cyanate with bicarbonate to produce ammonia and carbon dioxide. The chain is Cyanate hydratase from Methylobacillus flagellatus (strain ATCC 51484 / DSM 6875 / VKM B-1610 / KT).